The chain runs to 211 residues: RING finger protein narya (211 aa).

Residues 6 to 47 form an RING-type zinc finger; sequence CNKCFRHRKTDPAVPFHLTQCRHVICGPCLGQSSLEKNCPLC. A disordered region spans residues 149 to 211; it reads RRRHSAGERF…FGSDTKGFRL (63 aa). A compositionally biased stretch (basic and acidic residues) spans 153-165; the sequence is SAGERFHTPEFKE. Positions 172 to 184 are enriched in low complexity; the sequence is STSDKSPSDMPSD.

May interact with itself, with nenya and vilya through its RING-type zinc finger. Expressed in nurse cell and pro-oocytes (at protein level).

The protein resides in the chromosome. In terms of biological role, required for the formation of DNA double-strand breaks (DSBs) together with nenya and vilya during the meiotic recombination process. Plays a role in DSBs processing into crossovers. Plays a redundant role with nenya in chromosome segregation during female meiosis. The polypeptide is RING finger protein narya (Drosophila melanogaster (Fruit fly)).